The following is a 49-amino-acid chain: Osteocalcin (49 aa).

The Gla domain maps to 1–47 (YLDHGLGAPAPYPDPLEPKREVCELNPDCDELADHIGFQEAYRRFYG). The residue at position 9 (proline 9) is a Hydroxyproline. Positions 17, 21, 24, and 30 each coordinate Ca(2+). Residues glutamate 17, glutamate 21, and glutamate 24 each carry the 4-carboxyglutamate modification. A disulfide bridge links cysteine 23 with cysteine 29.

Belongs to the osteocalcin/matrix Gla protein family. Post-translationally, gamma-carboxyglutamic acid residues are formed by vitamin K dependent carboxylation. These residues are essential for the binding of calcium.

It localises to the secreted. Functionally, the carboxylated form is one of the main organic components of the bone matrix, which constitutes 1-2% of the total bone protein: it acts as a negative regulator of bone formation and is required to limit bone formation without impairing bone resorption or mineralization. The carboxylated form binds strongly to apatite and calcium. In terms of biological role, the uncarboxylated form acts as a hormone secreted by osteoblasts, which regulates different cellular processes, such as energy metabolism, male fertility and brain development. Regulates of energy metabolism by acting as a hormone favoring pancreatic beta-cell proliferation, insulin secretion and sensitivity and energy expenditure. Uncarboxylated osteocalcin hormone also promotes testosterone production in the testes: acts as a ligand for G protein-coupled receptor GPRC6A at the surface of Leydig cells, initiating a signaling response that promotes the expression of enzymes required for testosterone synthesis in a CREB-dependent manner. Also acts as a regulator of brain development: osteocalcin hormone crosses the blood-brain barrier and acts as a ligand for GPR158 on neurons, initiating a signaling response that prevents neuronal apoptosis in the hippocampus, favors the synthesis of all monoamine neurotransmitters and inhibits that of gamma-aminobutyric acid (GABA). Osteocalcin also crosses the placenta during pregnancy and maternal osteocalcin is required for fetal brain development. This chain is Osteocalcin (BGLAP), found in Bison priscus (Steppe wisent).